The chain runs to 409 residues: Bone morphogenetic protein 4 (409 aa).

The signal sequence occupies residues Met1–Gly19. A propeptide spanning residues Gly20–Arg293 is cleaved from the precursor. Ser91 carries the phosphoserine modification. Residues Ser91 to Arg110 are disordered. N-linked (GlcNAc...) asparagine glycans are attached at residues Asn144, Asn209, Asn351, and Asn366. 3 disulfide bridges follow: Cys309-Cys374, Cys338-Cys406, and Cys342-Cys408.

This sequence belongs to the TGF-beta family. Homodimer; disulfide-linked. Interacts with GREM2. Part of a complex consisting of TWSG1 and CHRD. Interacts with the serine proteases, HTRA1 and HTRA3; the interaction with either inhibits BMP4-mediated signaling. The HTRA protease activity is required for this inhibition. Interacts with SOSTDC1. Interacts with FBN1 (via N-terminal domain) and FBN2. Interacts with type I receptor BMPR1A. Interacts with type II receptor BMPR2. Interacts with FSTL1; this interaction inhibits the activation of the BMP4/Smad1/5/8 signaling pathway. Interacts with SCUBE3. Interacts with TGFBR3.

The protein localises to the secreted. Its subcellular location is the extracellular space. The protein resides in the extracellular matrix. Growth factor of the TGF-beta superfamily that plays essential roles in many developmental processes, including neurogenesis, vascular development, angiogenesis and osteogenesis. Acts in concert with PTHLH/PTHRP to stimulate ductal outgrowth during embryonic mammary development and to inhibit hair follicle induction. Initiates the canonical BMP signaling cascade by associating with type I receptor BMPR1A and type II receptor BMPR2. Once all three components are bound together in a complex at the cell surface, BMPR2 phosphorylates and activates BMPR1A. In turn, BMPR1A propagates signal by phosphorylating SMAD1/5/8 that travel to the nucleus and act as activators and repressors of transcription of target genes. Positively regulates the expression of odontogenic development regulator MSX1 via inducing the IPO7-mediated import of SMAD1 to the nucleus. Required for MSX1-mediated mesenchymal molar tooth bud development beyond the bud stage, via promoting Wnt signaling. Acts as a positive regulator of odontoblast differentiation during mesenchymal tooth germ formation, expression is repressed during the bell stage by MSX1-mediated inhibition of CTNNB1 signaling. Able to induce its own expression in dental mesenchymal cells and also in the neighboring dental epithelial cells via an MSX1-mediated pathway. Can also signal through non-canonical BMP pathways such as ERK/MAP kinase, PI3K/Akt, or SRC cascades. For example, induces SRC phosphorylation which, in turn, activates VEGFR2, leading to an angiogenic response. In Oryctolagus cuniculus (Rabbit), this protein is Bone morphogenetic protein 4 (BMP4).